The sequence spans 134 residues: MADTGEVQFMKPFISEKSSKSLEIPLGFNEYFPAPFPITVDLLDYSGRSWTVRMKKRGEKVFLTVGWENFVKDNNLEDGKYLQFIYDRDRTFYVIIYGHNMCSEYRDFPQVAVEVDDYENGEEEEDGDDQDKHQ.

A DNA-binding region (TF-B3) is located at residues 7–100 (VQFMKPFISE…TFYVIIYGHN (94 aa)).

It localises to the nucleus. This is B3 domain-containing protein At1g16640 from Arabidopsis thaliana (Mouse-ear cress).